Reading from the N-terminus, the 75-residue chain is Small ribosomal subunit protein bS18 (75 aa).

It belongs to the bacterial ribosomal protein bS18 family. Part of the 30S ribosomal subunit. Forms a tight heterodimer with protein bS6.

In terms of biological role, binds as a heterodimer with protein bS6 to the central domain of the 16S rRNA, where it helps stabilize the platform of the 30S subunit. The protein is Small ribosomal subunit protein bS18 of Psychromonas ingrahamii (strain DSM 17664 / CCUG 51855 / 37).